A 150-amino-acid chain; its full sequence is Macrodomain Ter protein (150 aa).

It belongs to the MatP family. In terms of assembly, homodimer.

Its subcellular location is the cytoplasm. In terms of biological role, required for spatial organization of the terminus region of the chromosome (Ter macrodomain) during the cell cycle. Prevents early segregation of duplicated Ter macrodomains during cell division. Binds specifically to matS, which is a 13 bp signature motif repeated within the Ter macrodomain. This Escherichia coli O81 (strain ED1a) protein is Macrodomain Ter protein.